The following is a 276-amino-acid chain: NH(3)-dependent NAD(+) synthetase (276 aa).

ATP is bound at residue 43–50 (GISGGVDS). Asp-49 is a Mg(2+) binding site. Position 146 (Arg-146) interacts with deamido-NAD(+). Position 166 (Thr-166) interacts with ATP. Residue Glu-171 coordinates Mg(2+). Residues Lys-179 and Asp-186 each coordinate deamido-NAD(+). Residues Lys-195 and Thr-217 each coordinate ATP. 266-267 (HK) provides a ligand contact to deamido-NAD(+).

The protein belongs to the NAD synthetase family. In terms of assembly, homodimer.

It carries out the reaction deamido-NAD(+) + NH4(+) + ATP = AMP + diphosphate + NAD(+) + H(+). It functions in the pathway cofactor biosynthesis; NAD(+) biosynthesis; NAD(+) from deamido-NAD(+) (ammonia route): step 1/1. Functionally, catalyzes the ATP-dependent amidation of deamido-NAD to form NAD. Uses ammonia as a nitrogen source. The sequence is that of NH(3)-dependent NAD(+) synthetase from Vibrio vulnificus (strain YJ016).